We begin with the raw amino-acid sequence, 343 residues long: MTDLESFIRGLPKTDLHMHIEGSIEPQLMLDLAARNGMKLRWDTAEALRGAYQFDNLQSFLDLYFEGCKVLVAEGDFRDVTRAYLRRAHEDGVVRAELFIGPQSFTERGTPLEALMSGVLGAMQEARREHGLSVGLMISVHRHRTEADAMVMLDQIMPWKDQIIAIGMGGAELGNPPAKFARFFKAARDRGFRTTVHAGEEGPAAYVREALELLQVDRIDHGNACLADPDLVRELAMRRIPLTVCPLSNLRLKGVTEMARHPLKTMMAQGLHVTVNTDDPPYFGGYVTENLLACREALDLSREEIVRLVRNGLEAAFVTTEEREILLRQLDDYLARHAVASTS.

3 residues coordinate Zn(2+): His-17, His-19, and His-197. The active-site Proton donor is Glu-200. Residue Asp-278 coordinates Zn(2+). A substrate-binding site is contributed by Asp-279.

Belongs to the metallo-dependent hydrolases superfamily. Adenosine and AMP deaminases family. Adenine deaminase type 2 subfamily. Zn(2+) is required as a cofactor.

It carries out the reaction adenine + H2O + H(+) = hypoxanthine + NH4(+). In terms of biological role, catalyzes the hydrolytic deamination of adenine to hypoxanthine. Plays an important role in the purine salvage pathway and in nitrogen catabolism. In Rhodopseudomonas palustris (strain BisB18), this protein is Adenine deaminase.